The following is a 781-amino-acid chain: Matrix non-peptidase homolog 1 (781 aa).

An N-terminal signal peptide occupies residues 1-27; sequence MTPPPASPSKKAKSSWLLIALIAVIIG. Asn-54 carries N-linked (GlcNAc...) asparagine glycosylation. Residues 63-94 are compositionally biased toward low complexity; sequence TSKATVSTTTTQSATTPSTTTTRIEETTTTTS. The segment at 63-113 is disordered; the sequence is TSKATVSTTTTQSATTPSTTTTRIEETTTTTSGAFDESVKNSEASTSTIPT. 4 N-linked (GlcNAc...) asparagine glycosylation sites follow: Asn-183, Asn-341, Asn-375, and Asn-520.

This is Matrix non-peptidase homolog 1 (mnp-1) from Caenorhabditis elegans.